We begin with the raw amino-acid sequence, 427 residues long: MFCYQCSQTVRGRACTIRGVCGKEPTVARLQDNLLFAIKGISAYLYHARELGYTDEEVDAFLERGFYSTLTNVNFDAGEFIDLALEAGEMNIRTMKLLKKAHIDTYGEPEPTEVRVGALEGPAIIATGHSLRALEELLKQTEGTGINVYTHSELLPAHGYPGLRKYPHLAGQLGGPWFDQKDTFSRYTAAILGTSNCVLLPRDDYRDRMFTCGVAALPGVEHLEGYDFSPLIDKALELPPLSEEDATTLTTGFGLSTILSLADKIRELVEDGKIRRFFLVGGCDSPLPRAKYYTEFVRKLPEDTVVLTLACGKYRFNSMDLGDIEGVPRLIDLGQCNDAIVAVELVEALSNLFQMDINELPLSIILSWMEQKAAAILWSLLSLDLKGMYIGPILPGWANEDIVKFLVDNYDLTPIGDPEEDIRKILG.

Residues cysteine 3, cysteine 6, cysteine 15, and cysteine 21 each contribute to the [4Fe-4S] cluster site. Histidine 129, glutamate 153, cysteine 197, cysteine 283, cysteine 311, cysteine 336, glutamate 370, and lysine 372 together coordinate hybrid [4Fe-2O-2S] cluster. Residue cysteine 283 is modified to Cysteine persulfide.

The protein belongs to the HCP family. It depends on [4Fe-4S] cluster as a cofactor. Hybrid [4Fe-2O-2S] cluster serves as cofactor.

The protein resides in the cytoplasm. The catalysed reaction is A + NH4(+) + H2O = hydroxylamine + AH2 + H(+). Catalyzes the reduction of hydroxylamine to form NH(3) and H(2)O. In Methanothermobacter thermautotrophicus (strain ATCC 29096 / DSM 1053 / JCM 10044 / NBRC 100330 / Delta H) (Methanobacterium thermoautotrophicum), this protein is Hydroxylamine reductase.